A 322-amino-acid polypeptide reads, in one-letter code: uncharacterized protein (322 aa).

2 stretches are compositionally biased toward basic residues: residues 1-16 and 43-61; these read MPGN…KSGT and LRPH…RRPV. Residues 1–69 are disordered; that stretch reads MPGNSRRRGA…PVKRADETET (69 aa). Gly-261, Ile-281, and Leu-290 together coordinate S-adenosyl-L-methionine.

This sequence belongs to the class IV-like SAM-binding methyltransferase superfamily. RNA methyltransferase TrmH family.

This is an uncharacterized protein from Mycobacterium bovis (strain BCG / Pasteur 1173P2).